The following is a 779-amino-acid chain: Lon protease (779 aa).

The Lon N-terminal domain occupies 10–203 (LPLLPLRGLL…ILLTILNNER (194 aa)). 355–362 (GPPGVGKT) is an ATP binding site. Residues 591–772 (KDQVGSVTGL…DEVLRHALTK (182 aa)) form the Lon proteolytic domain. Active-site residues include S678 and K721.

The protein belongs to the peptidase S16 family. Homohexamer. Organized in a ring with a central cavity.

Its subcellular location is the cytoplasm. It catalyses the reaction Hydrolysis of proteins in presence of ATP.. ATP-dependent serine protease that mediates the selective degradation of mutant and abnormal proteins as well as certain short-lived regulatory proteins. Required for cellular homeostasis and for survival from DNA damage and developmental changes induced by stress. Degrades polypeptides processively to yield small peptide fragments that are 5 to 10 amino acids long. Binds to DNA in a double-stranded, site-specific manner. In Brevibacillus choshinensis, this protein is Lon protease.